Here is a 202-residue protein sequence, read N- to C-terminus: Protein phosphatase 1 regulatory subunit 1B (202 aa).

At M1 the chain carries N-acetylmethionine. Residues 1–202 form a disordered region; that stretch reads MDPKDRKKIQ…QRPAHPEPGT (202 aa). A Phosphothreonine; by PKA modification is found at T34. The segment covering 41-63 has biased composition (basic and acidic residues); the sequence is LSEHSSPEEEASPHQRASGEGHH. A phosphoserine mark is found at S45 and S46. The residue at position 75 (T75) is a Phosphothreonine; by CDK5. The segment covering 89–100 has biased composition (polar residues); it reads HLQSISNLGENQ. S102 bears the Phosphoserine mark. Over residues 109–118 the composition is skewed to basic and acidic residues; sequence GELRELGYPR. Residues 119–136 are compositionally biased toward acidic residues; it reads EEEEEEEEEDEEEEEDSQ. At S135 the chain carries Phosphoserine. The span at 191 to 202 shows a compositional bias: basic and acidic residues; that stretch reads EPQRPAHPEPGT.

This sequence belongs to the protein phosphatase inhibitor 1 family. Dopamine- and cyclic AMP-regulated neuronal phosphoprotein. In terms of processing, phosphorylation of Thr-34 is required for activity.

Its subcellular location is the cytoplasm. Its function is as follows. Inhibitor of protein-phosphatase 1. The polypeptide is Protein phosphatase 1 regulatory subunit 1B (PPP1R1B) (Bos taurus (Bovine)).